Consider the following 582-residue polypeptide: Probable DNA ligase (582 aa).

Glutamate 243 is a binding site for ATP. The N6-AMP-lysine intermediate role is filled by lysine 245. Residues arginine 250, arginine 265, glutamate 295, phenylalanine 335, arginine 410, and lysine 416 each coordinate ATP.

This sequence belongs to the ATP-dependent DNA ligase family. The cofactor is Mg(2+).

It carries out the reaction ATP + (deoxyribonucleotide)n-3'-hydroxyl + 5'-phospho-(deoxyribonucleotide)m = (deoxyribonucleotide)n+m + AMP + diphosphate.. In terms of biological role, DNA ligase that seals nicks in double-stranded DNA during DNA replication, DNA recombination and DNA repair. This chain is Probable DNA ligase, found in Dictyoglomus turgidum (strain DSM 6724 / Z-1310).